Reading from the N-terminus, the 444-residue chain is Phosphoglucosamine mutase (444 aa).

Residue Ser102 is the Phosphoserine intermediate of the active site. Mg(2+)-binding residues include Ser102, Asp241, Asp243, and Asp245. Ser102 bears the Phosphoserine mark.

The protein belongs to the phosphohexose mutase family. Requires Mg(2+) as cofactor. Activated by phosphorylation.

It catalyses the reaction alpha-D-glucosamine 1-phosphate = D-glucosamine 6-phosphate. Catalyzes the conversion of glucosamine-6-phosphate to glucosamine-1-phosphate. The polypeptide is Phosphoglucosamine mutase (Pasteurella multocida (strain Pm70)).